A 459-amino-acid polypeptide reads, in one-letter code: ATP-dependent protease ATPase subunit HslU (459 aa).

ATP contacts are provided by residues valine 18, 60–65, aspartate 272, glutamate 337, and arginine 409; that span reads GVGKTE.

The protein belongs to the ClpX chaperone family. HslU subfamily. In terms of assembly, a double ring-shaped homohexamer of HslV is capped on each side by a ring-shaped HslU homohexamer. The assembly of the HslU/HslV complex is dependent on binding of ATP.

It localises to the cytoplasm. Its function is as follows. ATPase subunit of a proteasome-like degradation complex; this subunit has chaperone activity. The binding of ATP and its subsequent hydrolysis by HslU are essential for unfolding of protein substrates subsequently hydrolyzed by HslV. HslU recognizes the N-terminal part of its protein substrates and unfolds these before they are guided to HslV for hydrolysis. This chain is ATP-dependent protease ATPase subunit HslU, found in Thermoanaerobacter pseudethanolicus (strain ATCC 33223 / 39E) (Clostridium thermohydrosulfuricum).